The following is an 833-amino-acid chain: Leucine--tRNA ligase (833 aa).

Positions 41–52 (PYPSGAGLHVGH) match the 'HIGH' region motif. A 'KMSKS' region motif is present at residues 610-614 (KMSKS). Position 613 (Lys613) interacts with ATP.

The protein belongs to the class-I aminoacyl-tRNA synthetase family.

It is found in the cytoplasm. The enzyme catalyses tRNA(Leu) + L-leucine + ATP = L-leucyl-tRNA(Leu) + AMP + diphosphate. The chain is Leucine--tRNA ligase from Streptococcus pyogenes serotype M49 (strain NZ131).